The following is a 364-amino-acid chain: Membrane-bound lytic murein transglycosylase C (364 aa).

Positions 1-19 (MNKYKKFLPLLVLIPFLAS) are cleaved as a signal peptide. A lipid anchor (N-palmitoyl cysteine) is attached at cysteine 20. Residue cysteine 20 is the site of S-diacylglycerol cysteine attachment.

Belongs to the transglycosylase Slt family.

The protein localises to the cell outer membrane. It carries out the reaction Exolytic cleavage of the (1-&gt;4)-beta-glycosidic linkage between N-acetylmuramic acid (MurNAc) and N-acetylglucosamine (GlcNAc) residues in peptidoglycan, from either the reducing or the non-reducing ends of the peptidoglycan chains, with concomitant formation of a 1,6-anhydrobond in the MurNAc residue.. Its function is as follows. Murein-degrading enzyme. May play a role in recycling of muropeptides during cell elongation and/or cell division. This chain is Membrane-bound lytic murein transglycosylase C, found in Glaesserella parasuis serovar 5 (strain SH0165) (Haemophilus parasuis).